Here is a 170-residue protein sequence, read N- to C-terminus: ATP synthase subunit b (170 aa).

The helical transmembrane segment at 15–37 (FNLFETNILNWAVVVFGLYKFLP) threads the bilayer.

This sequence belongs to the ATPase B chain family. In terms of assembly, F-type ATPases have 2 components, F(1) - the catalytic core - and F(0) - the membrane proton channel. F(1) has five subunits: alpha(3), beta(3), gamma(1), delta(1), epsilon(1). F(0) has four main subunits: a(1), b(1), b'(1) and c(10-14). The alpha and beta chains form an alternating ring which encloses part of the gamma chain. F(1) is attached to F(0) by a central stalk formed by the gamma and epsilon chains, while a peripheral stalk is formed by the delta, b and b' chains.

Its subcellular location is the cellular thylakoid membrane. Functionally, f(1)F(0) ATP synthase produces ATP from ADP in the presence of a proton or sodium gradient. F-type ATPases consist of two structural domains, F(1) containing the extramembraneous catalytic core and F(0) containing the membrane proton channel, linked together by a central stalk and a peripheral stalk. During catalysis, ATP synthesis in the catalytic domain of F(1) is coupled via a rotary mechanism of the central stalk subunits to proton translocation. In terms of biological role, component of the F(0) channel, it forms part of the peripheral stalk, linking F(1) to F(0). This chain is ATP synthase subunit b, found in Prochlorococcus marinus (strain MIT 9312).